Reading from the N-terminus, the 525-residue chain is M-phase inducer phosphatase 1 (525 aa).

Positions 73-83 (MGSSESTDSGF) match the Phosphodegron motif. Residue serine 75 is modified to Phosphoserine; by CHEK1. A phosphoserine; by NEK11 mark is found at serine 78, serine 81, and serine 87. Serine 106 carries the phosphoserine modification. Residue serine 123 is modified to Phosphoserine; by CHEK1 and CHEK2. Positions 140-142 (KEN) match the KEN box motif. Phosphoserine; by CHEK1 is present on serine 177. 2 disordered regions span residues 179-204 (PARMLSSNERDGNEPGNSIPFMPQSP) and 262-308 (SASC…PEKP). Phosphoserine; by CHEK1 and CHEK2 is present on residues serine 279 and serine 293. A compositionally biased stretch (low complexity) spans 294–306 (VAGASPEEAASPE). A Phosphoserine modification is found at serine 322. Residues 377–483 (LIKEFVIIDC…FFLKCQSHCE (107 aa)) enclose the Rhodanese domain. Residue cysteine 432 is part of the active site. Residue threonine 508 is modified to Phosphothreonine; by CHEK1. Serine 514 and serine 520 each carry phosphoserine; by PLK3.

The protein belongs to the MPI phosphatase family. In terms of assembly, interacts with CCNB1/cyclin B1. Interacts with YWHAE/14-3-3 epsilon when phosphorylated. Interacts with CUL1 specifically when CUL1 is neddylated and active. Interacts with BTRC/BTRCP1 and FBXW11/BTRCP2. Interactions with CUL1, BTRC and FBXW11 are enhanced upon DNA damage. Interacts with HSP90AB1; prevents heat shock-mediated CDC25A degradation and contributes to cell cycle progression. In terms of processing, phosphorylated by CHEK1 on Ser-75, Ser-123, Ser-177, Ser-279, Ser-293 and Thr-508 during checkpoint mediated cell cycle arrest. Also phosphorylated by CHEK2 on Ser-123, Ser-279, and Ser-293 during checkpoint mediated cell cycle arrest. Phosphorylation on Ser-177 and Thr-508 creates binding sites for YWHAE/14-3-3 epsilon which inhibits CDC25A. Phosphorylation on Ser-75, Ser-123, Ser-177, Ser-279 and Ser-293 may also promote ubiquitin-dependent proteolysis of CDC25A by the SCF complex. Phosphorylation of CDC25A at Ser-75 by CHEK1 primes it for subsequent phosphorylation at Ser-78, Ser-81 and Ser-87 by NEK11. Phosphorylation by NEK11 is required for BTRC-mediated polyubiquitination and degradation. Phosphorylation by PIM1 leads to an increase in phosphatase activity. Phosphorylated by PLK3 following DNA damage, leading to promote its ubiquitination and degradation. Ubiquitinated by the anaphase promoting complex/cyclosome (APC/C) ubiquitin ligase complex that contains FZR1/CDH1 during G1 phase leading to its degradation by the proteasome. Ubiquitinated by a SCF complex containing BTRC and FBXW11 during S phase leading to its degradation by the proteasome. Deubiquitination by USP17L2/DUB3 leads to its stabilization.

The catalysed reaction is O-phospho-L-tyrosyl-[protein] + H2O = L-tyrosyl-[protein] + phosphate. Stimulated by B-type cyclins. Stimulated by PIM1-mediated phosphorylation. Its function is as follows. Tyrosine protein phosphatase which functions as a dosage-dependent inducer of mitotic progression. Directly dephosphorylates CDK1 and stimulates its kinase activity. Also dephosphorylates CDK2 in complex with cyclin-E, in vitro. This chain is M-phase inducer phosphatase 1 (CDC25A), found in Bos taurus (Bovine).